An 86-amino-acid polypeptide reads, in one-letter code: Putative regulatory protein Desal_2819 (86 aa).

The protein belongs to the RemA family.

In Maridesulfovibrio salexigens (strain ATCC 14822 / DSM 2638 / NCIMB 8403 / VKM B-1763) (Desulfovibrio salexigens), this protein is Putative regulatory protein Desal_2819.